Reading from the N-terminus, the 342-residue chain is Probable receptor-like protein kinase At4g10390 (342 aa).

The Protein kinase domain occupies 41 to 336 (SNFSRLIGSG…IKEIPSLSFL (296 aa)). Residues 47–55 (IGSGGYSSI) and lysine 69 each bind ATP. Residue aspartate 165 is the Proton acceptor of the active site. Residues serine 169 and serine 201 each carry the phosphoserine modification. The residue at position 220 (tyrosine 220) is a Phosphotyrosine.

Belongs to the protein kinase superfamily. Ser/Thr protein kinase family.

It carries out the reaction L-seryl-[protein] + ATP = O-phospho-L-seryl-[protein] + ADP + H(+). It catalyses the reaction L-threonyl-[protein] + ATP = O-phospho-L-threonyl-[protein] + ADP + H(+). The sequence is that of Probable receptor-like protein kinase At4g10390 from Arabidopsis thaliana (Mouse-ear cress).